We begin with the raw amino-acid sequence, 62 residues long: Sperm protamine P1 (62 aa).

The interval 1–62 is disordered; sequence MARYRRHSRS…RYSRRGRRRY (62 aa).

The protein belongs to the protamine P1 family. Testis.

It localises to the nucleus. It is found in the chromosome. Functionally, protamines substitute for histones in the chromatin of sperm during the haploid phase of spermatogenesis. They compact sperm DNA into a highly condensed, stable and inactive complex. This is Sperm protamine P1 (PRM1) from Antechinomys laniger (Eastern jerboa marsupial).